Here is a 218-residue protein sequence, read N- to C-terminus: tRNA (guanosine(18)-2'-O)-methyltransferase (218 aa).

S-adenosyl-L-methionine contacts are provided by threonine 111 and isoleucine 154.

It belongs to the class IV-like SAM-binding methyltransferase superfamily. RNA methyltransferase TrmH family.

It catalyses the reaction guanosine(18) in tRNA + S-adenosyl-L-methionine = 2'-O-methylguanosine(18) in tRNA + S-adenosyl-L-homocysteine + H(+). Functionally, catalyzes the 2'-O methylation of guanosine at position 18 in tRNA. This is tRNA (guanosine(18)-2'-O)-methyltransferase from Borreliella burgdorferi (strain ATCC 35210 / DSM 4680 / CIP 102532 / B31) (Borrelia burgdorferi).